The chain runs to 140 residues: Large ribosomal subunit protein uL11 (140 aa).

Belongs to the universal ribosomal protein uL11 family. Part of the ribosomal stalk of the 50S ribosomal subunit. Interacts with L10 and the large rRNA to form the base of the stalk. L10 forms an elongated spine to which L12 dimers bind in a sequential fashion forming a multimeric L10(L12)X complex. One or more lysine residues are methylated.

Its function is as follows. Forms part of the ribosomal stalk which helps the ribosome interact with GTP-bound translation factors. The polypeptide is Large ribosomal subunit protein uL11 (Nitratidesulfovibrio vulgaris (strain DSM 19637 / Miyazaki F) (Desulfovibrio vulgaris)).